Consider the following 241-residue polypeptide: tRNA (guanine-N(7)-)-methyltransferase (241 aa).

Residues glycine 61, glutamate 84, arginine 86, asparagine 117, alanine 118, and leucine 137 each contribute to the S-adenosyl-L-methionine site. Residue aspartate 140 is part of the active site. Residues 141–149 (PHFKKTKHK) are alphaC helix. 2 residues coordinate S-adenosyl-L-methionine: threonine 215 and glutamate 217. An alpha6 helix region spans residues 215–223 (TEEGKKVQR).

The protein belongs to the class I-like SAM-binding methyltransferase superfamily. TrmB family. Catalytic component of the METTL1-WDR4 complex, composed of mettl1 and wdr4.

It localises to the nucleus. The enzyme catalyses guanosine(46) in tRNA + S-adenosyl-L-methionine = N(7)-methylguanosine(46) in tRNA + S-adenosyl-L-homocysteine. The catalysed reaction is a guanosine in mRNA + S-adenosyl-L-methionine = an N(7)-methylguanosine in mRNA + S-adenosyl-L-homocysteine. It catalyses the reaction a guanosine in miRNA + S-adenosyl-L-methionine = an N(7)-methylguanosine in miRNA + S-adenosyl-L-homocysteine. The protein operates within tRNA modification; N(7)-methylguanine-tRNA biosynthesis. Catalytic component of METTL1-WDR4 methyltransferase complex that mediates the formation of N(7)-methylguanine in a subset of RNA species, such as tRNAs, mRNAs and microRNAs (miRNAs). Catalyzes the formation of N(7)-methylguanine at position 46 (m7G46) in a large subset of tRNAs that contain the 5'-RAGGU-3' motif within the variable loop. M7G46 interacts with C13-G22 in the D-loop to stabilize tRNA tertiary structure and protect tRNAs from decay. Also acts as a methyltransferase for a subset of internal N(7)-methylguanine in mRNAs. Internal N(7)-methylguanine methylation of mRNAs in response to stress promotes their relocalization to stress granules, thereby suppressing their translation. Also methylates a specific subset of miRNAs. This Danio rerio (Zebrafish) protein is tRNA (guanine-N(7)-)-methyltransferase (mettl1).